The chain runs to 353 residues: Photosystem II D2 protein (353 aa).

N-acetylthreonine is present on Thr-2. Thr-2 carries the post-translational modification Phosphothreonine. Residues 41–61 form a helical membrane-spanning segment; it reads CAYFALGGWFTGTTFVTSWYT. Residue His-118 participates in chlorophyll a binding. Residues 125-141 form a helical membrane-spanning segment; it reads GFMLRQFELARSVQLRP. Gln-130 and Asn-143 together coordinate pheophytin a. A helical membrane pass occupies residues 153–166; it reads VFVSVFLIYPLGQS. His-198 is a binding site for chlorophyll a. Residues 208-228 traverse the membrane as a helical segment; it reads AALLCAIHGATVENTLFEDGD. Residues His-215 and Phe-262 each coordinate a plastoquinone. His-215 serves as a coordination point for Fe cation. Residue His-269 participates in Fe cation binding. Residues 279–295 form a helical membrane-spanning segment; the sequence is GLWMSALGVVGLALNLR.

It belongs to the reaction center PufL/M/PsbA/D family. In terms of assembly, PSII is composed of 1 copy each of membrane proteins PsbA, PsbB, PsbC, PsbD, PsbE, PsbF, PsbH, PsbI, PsbJ, PsbK, PsbL, PsbM, PsbT, PsbX, PsbY, PsbZ, Psb30/Ycf12, at least 3 peripheral proteins of the oxygen-evolving complex and a large number of cofactors. It forms dimeric complexes. It depends on The D1/D2 heterodimer binds P680, chlorophylls that are the primary electron donor of PSII, and subsequent electron acceptors. It shares a non-heme iron and each subunit binds pheophytin, quinone, additional chlorophylls, carotenoids and lipids. There is also a Cl(-1) ion associated with D1 and D2, which is required for oxygen evolution. The PSII complex binds additional chlorophylls, carotenoids and specific lipids. as a cofactor.

It localises to the plastid. Its subcellular location is the chloroplast thylakoid membrane. It carries out the reaction 2 a plastoquinone + 4 hnu + 2 H2O = 2 a plastoquinol + O2. Functionally, photosystem II (PSII) is a light-driven water:plastoquinone oxidoreductase that uses light energy to abstract electrons from H(2)O, generating O(2) and a proton gradient subsequently used for ATP formation. It consists of a core antenna complex that captures photons, and an electron transfer chain that converts photonic excitation into a charge separation. The D1/D2 (PsbA/PsbD) reaction center heterodimer binds P680, the primary electron donor of PSII as well as several subsequent electron acceptors. D2 is needed for assembly of a stable PSII complex. In Citrus sinensis (Sweet orange), this protein is Photosystem II D2 protein.